The sequence spans 589 residues: MDQKVRQFEVCTQDGSVDRHGNPAIRANTGKWLTAILILVNQGLATLAFFGVGVNLVLFLTRVMGQDNAEAANNVSKWTGTVYIFSLLGAFLSDSYWGRYKTCAIFQASFVAGLMMLSLSTGALLLEPSGCGVEDSPCKPHSTFKTVLFYLSVYLIALGYGGYQPNIATFGADQFDAEDSVEGHSKIAFFSYFYLALNLGSLFSNTVLGYFEDQGEWPLGFWASAGSAFAGLVLFLIGTPKYRHFTPRESPWSRFCQVLVAATRKAKIDVHHEELNLYDSETQYTGDKKILHTKGFRFLDRAAIVTPDDEAEKVESGSKYDPWRLCSVTQVEEVKCVLRLLPIWLCTILYSVVFTQMASLFVVQGAAMKTNIKNFRIPASSMSSFDILSVAFFIFAYRRFLDPLFARLNKTERNKGLTELQRMGIGLVIAIMAMISAGIVEIHRLKNKEPESATSISSSSTLSIFWQVPQYMLIGASEVFMYVGQLEFFNSQAPTGLKSFASALCMASISLGNYVSSLLVSIVMKISTTDDVHGWIPENLNKGHLERFYFLLAGLTAADFVVYLICAKWYKYIKSEASFSESVTEEEEV.

The next 2 helical transmembrane spans lie at 32–52 and 78–98; these read WLTA…FFGV and WTGT…SYWG. Threonine 102 bears the Phosphothreonine mark. The next 10 helical transmembrane spans lie at 105 to 125, 147 to 167, 187 to 207, 217 to 237, 343 to 363, 377 to 397, 423 to 443, 464 to 484, 504 to 524, and 548 to 568; these read IFQA…GALL, VLFY…QPNI, IAFF…SNTV, WPLG…LFLI, IWLC…LFVV, IPAS…IFAY, MGIG…VEIH, IFWQ…MYVG, LCMA…SIVM, and FYFL…ICAK.

It belongs to the major facilitator superfamily. Proton-dependent oligopeptide transporter (POT/PTR) (TC 2.A.17) family. As to expression, expressed in xylem parenchyma cells within the vasculature. Expressed in siliques and flowers. Higher expression in shoots than in roots.

It localises to the cell membrane. Its function is as follows. Low-affinity nitrate transporter. Involved in nitrate removal from xylem sap. Not involved in oligopeptides transport. The polypeptide is Protein NRT1/ PTR FAMILY 7.2 (NPF7.2) (Arabidopsis thaliana (Mouse-ear cress)).